A 158-amino-acid chain; its full sequence is Large ribosomal subunit protein uL30 (158 aa).

The protein belongs to the universal ribosomal protein uL30 family. Part of the 50S ribosomal subunit.

The protein is Large ribosomal subunit protein uL30 of Saccharolobus solfataricus (strain ATCC 35092 / DSM 1617 / JCM 11322 / P2) (Sulfolobus solfataricus).